The chain runs to 281 residues: 4-hydroxy-3-methylbut-2-enyl diphosphate reductase (281 aa).

Position 12 (Cys-12) interacts with [4Fe-4S] cluster. (2E)-4-hydroxy-3-methylbut-2-enyl diphosphate contacts are provided by His-41 and His-74. 2 residues coordinate dimethylallyl diphosphate: His-41 and His-74. Residues His-41 and His-74 each coordinate isopentenyl diphosphate. Cys-96 contributes to the [4Fe-4S] cluster binding site. A (2E)-4-hydroxy-3-methylbut-2-enyl diphosphate-binding site is contributed by His-124. His-124 serves as a coordination point for dimethylallyl diphosphate. His-124 is an isopentenyl diphosphate binding site. Catalysis depends on Glu-126, which acts as the Proton donor. Residue Thr-164 participates in (2E)-4-hydroxy-3-methylbut-2-enyl diphosphate binding. Position 193 (Cys-193) interacts with [4Fe-4S] cluster. Ser-221, Asn-223, and Ser-265 together coordinate (2E)-4-hydroxy-3-methylbut-2-enyl diphosphate. 3 residues coordinate dimethylallyl diphosphate: Ser-221, Asn-223, and Ser-265. Isopentenyl diphosphate-binding residues include Ser-221, Asn-223, and Ser-265.

It belongs to the IspH family. [4Fe-4S] cluster serves as cofactor.

The catalysed reaction is isopentenyl diphosphate + 2 oxidized [2Fe-2S]-[ferredoxin] + H2O = (2E)-4-hydroxy-3-methylbut-2-enyl diphosphate + 2 reduced [2Fe-2S]-[ferredoxin] + 2 H(+). The enzyme catalyses dimethylallyl diphosphate + 2 oxidized [2Fe-2S]-[ferredoxin] + H2O = (2E)-4-hydroxy-3-methylbut-2-enyl diphosphate + 2 reduced [2Fe-2S]-[ferredoxin] + 2 H(+). It participates in isoprenoid biosynthesis; dimethylallyl diphosphate biosynthesis; dimethylallyl diphosphate from (2E)-4-hydroxy-3-methylbutenyl diphosphate: step 1/1. The protein operates within isoprenoid biosynthesis; isopentenyl diphosphate biosynthesis via DXP pathway; isopentenyl diphosphate from 1-deoxy-D-xylulose 5-phosphate: step 6/6. In terms of biological role, catalyzes the conversion of 1-hydroxy-2-methyl-2-(E)-butenyl 4-diphosphate (HMBPP) into a mixture of isopentenyl diphosphate (IPP) and dimethylallyl diphosphate (DMAPP). Acts in the terminal step of the DOXP/MEP pathway for isoprenoid precursor biosynthesis. The chain is 4-hydroxy-3-methylbut-2-enyl diphosphate reductase from Oleidesulfovibrio alaskensis (strain ATCC BAA-1058 / DSM 17464 / G20) (Desulfovibrio alaskensis).